A 1268-amino-acid chain; its full sequence is MTAADHPAFGRDEEAALLLERTHHRHDPRWLLPVSPHVCMACALELLPEPGVSLVRKKHVVFCFQDALVRHTSLVAQLVAQDQRVCIHFVRVLFGLLNSVEDGSMADLCIEVLVQLTTQPNMEQTIRCLMNECHRELCNLRSMGGSLATTTLLGKLVDTIPGLADELVMEHGNLMEHLLRGLVYPNEGVQASICYLYGKLYSSPTAAEMLSGHFREKLCALFLSTLDSAQTKDLQINCLGLLRQLLKYDLFVSLIMNKSVPVEGAESVERPSRETSLPLVLKKFLLSRDEILQVASSHCITAVLVHSPAKHAVAFIHADIPEFLFEHLSSSSEILVWSSYNCLILLAEEPLFFSKCHTVYGIEAVVRSLQGSQQMTNTELHTQGLLLFKEILTRQPEEIRLFTSSALCRDASRALQEAVSSPVLAVAAEALRAISAFLRKDHQSSLPVQYRALRALLEAMLSRCMEFSQTPLNRRSLGHACSRNSEKATLRKGSFLLSTLEGFRNACRLAVEFQGEPSAQENPFTAPSAEKEDTLEAFSEYLLSACDSQCIPMVMRYSEEATHPKLMEVFLSILHSLFVIIPHMKVKFSRKLADSSFIRLTLELKARFCSGQSHSSLNQVCSSFLYYMCLNLLSAPEKTEPLSQEELSAVSEFLQHGLPHISSRTPESLAFLSDRQYVEAATRQRQYCILLLFYLAHIHDDRFVPEAELFVAVQSFLLSLQDQGECPPPVVCKASMYLLAVCGDKDSALAEAVISAIRKFLEGIPDLRGVYTHHPLLLRFFLAYPGLMSRFGHRVLELWFSWEESGYENLDDDSSPGRTVFPANLAALFRVLQSTPSILLILLDLVYSSPVDTARKVLIVLRVFLWENEDVKVGGLIRGHFLLILQRLLVEYGASTSGGNLPLLLNLLSLVQMRNESEQELDSMAMKLLHQVSMLCGKCSPAHVDILQPSFNFLYWSLHQTTPSSQKRAAAVLLSSTALLELLEKMLALTWTETGSSPRTPLLSSAWLLTASFSAQQHNGNLQVHRTLSVELNQVLKALSFPKKMSALLSAAILRFLRTALQQSFSSALVVLVPSGDQPLSTPEDAVLAPLGKSQVLALLIGLQNLLVQKDPLLSQACIGCLEALLDYLHARSPDIALHVASQPWNRFLLFTLLDAGENSFLRPEILRLMTLFVQYRSSCVLSREEVGLILQGAALVDLSALSNDTLQALHGFLLQVQSMGLLNDQHMTQTLQSSLEGLCSRTFPAQPLFQDMLCLGGVSVSQAHIRG.

In terms of tissue distribution, strongly expressed in testis, weakly in brain, and not detected in spleen, liver, kidney, small intestine or colon.

Required for normal meiotic chromosome synapsis. May be involved in the formation of meiotic double-strand breaks (DSBs) in spermatocytes. The chain is Meiosis inhibitor protein 1 from Mus musculus (Mouse).